The chain runs to 464 residues: Purple acid phosphatase (464 aa).

Positions 1–30 are cleaved as a signal peptide; the sequence is MGVVEGLLALALVLSACVMCNGGSSSPFIR. Residues Asn-108 and Asn-136 are each glycosylated (N-linked (GlcNAc...) asparagine). Asp-162 provides a ligand contact to Fe cation. N-linked (GlcNAc...) asparagine glycosylation is present at Asn-170. Fe cation contacts are provided by Asp-191 and Tyr-194. Asp-191 is a binding site for Zn(2+). Asn-228 lines the Zn(2+) pocket. Asn-228 serves as a coordination point for substrate. Asn-301 carries an N-linked (GlcNAc...) asparagine glycan. Zn(2+) is bound at residue His-313. The active-site Proton donor is His-323. His-350 is a binding site for Zn(2+). 350 to 352 is a binding site for substrate; it reads HVH. His-352 is a binding site for Fe cation. N-linked (GlcNAc...) asparagine glycans are attached at residues Asn-398 and Asn-423.

It belongs to the metallophosphoesterase superfamily. Purple acid phosphatase family. Homodimer; disulfide-linked. Fe cation is required as a cofactor. The cofactor is Zn(2+). Requires Mn(2+) as cofactor. It depends on Cu(2+) as a cofactor. Mg(2+) serves as cofactor.

It localises to the secreted. It carries out the reaction a phosphate monoester + H2O = an alcohol + phosphate. In Glycine max (Soybean), this protein is Purple acid phosphatase.